Reading from the N-terminus, the 309-residue chain is Homoserine kinase (309 aa).

An ATP-binding site is contributed by 91-101 (PIGSGLGSSAC).

The protein belongs to the GHMP kinase family. Homoserine kinase subfamily.

It is found in the cytoplasm. The catalysed reaction is L-homoserine + ATP = O-phospho-L-homoserine + ADP + H(+). Its pathway is amino-acid biosynthesis; L-threonine biosynthesis; L-threonine from L-aspartate: step 4/5. Catalyzes the ATP-dependent phosphorylation of L-homoserine to L-homoserine phosphate. The sequence is that of Homoserine kinase from Salmonella paratyphi B (strain ATCC BAA-1250 / SPB7).